A 429-amino-acid polypeptide reads, in one-letter code: Palmitoyltransferase ZDHHC23 (429 aa).

At 1 to 81 (MKPVKKKKTE…RIPWLRGAKK (81 aa)) the chain is on the cytoplasmic side. A helical membrane pass occupies residues 82 to 102 (VNISILPPLVLLPVLLRVASW). His-103 is a topological domain (lumenal). Residues 104–124 (FLLGVVVLTSLPMLALWYYYL) traverse the membrane as a helical segment. Residues 125 to 130 (THRRKE) lie on the Cytoplasmic side of the membrane. Residues 131 to 151 (QTLFFLSLGLFSLGYMYYVFL) form a helical membrane-spanning segment. The Lumenal portion of the chain corresponds to 152–159 (QEVVPQGH). A helical transmembrane segment spans residues 160 to 180 (VGPAQLALLTCGLFLILVALY). Over 181–296 (RAKKNPGYLS…NSCVGESNHQ (116 aa)) the chain is Cytoplasmic. The tract at residues 212 to 247 (QEKTKGFPGTDTSGSLNNRTLKDDAKGSSRVGLDSP) is disordered. Residues 221 to 230 (TDTSGSLNNR) show a composition bias toward polar residues. In terms of domain architecture, DHHC spans 253-303 (DWCAKCQLVRPARAWHCRICGICVRRMDHHCVWINSCVGESNHQAFILALS). The S-palmitoyl cysteine intermediate role is filled by Cys-283. Residues 297–317 (AFILALSIFLLTSVYGISLTL) traverse the membrane as a helical segment. Over 318 to 347 (NTICRDRSLFTALFYCPGVYANYSSALSFT) the chain is Lumenal. A helical transmembrane segment spans residues 348-368 (CVWYSVIITAGMAYIFLIQLI). At 369–429 (NISYNVTERE…TVHTPAEDIV (61 aa)) the chain is on the cytoplasmic side. The segment at 426-429 (EDIV) is interaction with NOS1.

Belongs to the DHHC palmitoyltransferase family. As to quaternary structure, interacts with NOS1. As to expression, expressed in the brain (at protein level), with highest levels in olfactory bulb, piriform cortex and hippocampus.

The protein resides in the golgi apparatus membrane. It localises to the golgi apparatus. It is found in the trans-Golgi network membrane. It catalyses the reaction L-cysteinyl-[protein] + hexadecanoyl-CoA = S-hexadecanoyl-L-cysteinyl-[protein] + CoA. In terms of biological role, palmitoyltransferase that could catalyze the addition of palmitate onto various protein substrates and be involved in a variety of cellular processes. Palmitoyltransferase that mediates palmitoylation of KCNMA1, regulating localization of KCNMA1 to the plasma membrane. May be involved in NOS1 regulation and targeting to the synaptic membrane. The chain is Palmitoyltransferase ZDHHC23 from Rattus norvegicus (Rat).